Here is a 304-residue protein sequence, read N- to C-terminus: HPr kinase/phosphorylase (304 aa).

Residues His136 and Lys157 contribute to the active site. Residue 151 to 158 (GESGIGKS) participates in ATP binding. Ser158 provides a ligand contact to Mg(2+). Residue Asp175 is the Proton acceptor; for phosphorylation activity. Proton donor; for dephosphorylation activity of the active site. An important for the catalytic mechanism of both phosphorylation and dephosphorylation region spans residues 198 to 207 (LEVRGIGIID). Glu199 is a binding site for Mg(2+). The active site involves Arg240. The segment at 261-266 (PVRPGR) is important for the catalytic mechanism of dephosphorylation.

Belongs to the HPrK/P family. As to quaternary structure, homohexamer. It depends on Mg(2+) as a cofactor.

The catalysed reaction is [HPr protein]-L-serine + ATP = [HPr protein]-O-phospho-L-serine + ADP + H(+). The enzyme catalyses [HPr protein]-O-phospho-L-serine + phosphate + H(+) = [HPr protein]-L-serine + diphosphate. Its function is as follows. Catalyzes the ATP- as well as the pyrophosphate-dependent phosphorylation of a specific serine residue in HPr, a phosphocarrier protein of the phosphoenolpyruvate-dependent sugar phosphotransferase system (PTS). HprK/P also catalyzes the pyrophosphate-producing, inorganic phosphate-dependent dephosphorylation (phosphorolysis) of seryl-phosphorylated HPr (P-Ser-HPr). The two antagonistic activities of HprK/P are regulated by several intracellular metabolites, which change their concentration in response to the absence or presence of rapidly metabolisable carbon sources (glucose, fructose, etc.) in the growth medium. Therefore, by controlling the phosphorylation state of HPr, HPrK/P is a sensor enzyme that plays a major role in the regulation of carbon metabolism and sugar transport: it mediates carbon catabolite repression (CCR), and regulates PTS-catalyzed carbohydrate uptake and inducer exclusion. In Clostridium botulinum (strain Alaska E43 / Type E3), this protein is HPr kinase/phosphorylase.